The chain runs to 963 residues: Aminopeptidase N (963 aa).

The Cytoplasmic segment spans residues 2–8 (AKGFYIS). The helical; Signal-anchor for type II membrane protein transmembrane segment at 9–32 (KALGILGILLGVAAVATIIALSVV) threads the bilayer. Positions 33–64 (YAQEKNKNAEHVPQAPTSPTITTTAAITLDQS) are cytosolic Ser/Thr-rich junction. Topologically, residues 33–963 (YAQEKNKNAE…VVLNWFIEHS (931 aa)) are extracellular. Residues 65–963 (KPWNRYRLPT…VVLNWFIEHS (899 aa)) are metalloprotease. N-linked (GlcNAc...) asparagine glycosylation is found at Asn82 and Asn124. Position 171 is a sulfotyrosine (Tyr171). N-linked (GlcNAc...) asparagine glycans are attached at residues Asn229, Asn237, Asn258, Asn286, Asn314, and Asn328. 347–351 (GAMEN) is a binding site for substrate. His383 is a Zn(2+) binding site. Glu384 (proton acceptor) is an active-site residue. Zn(2+) is bound by residues His387 and Glu406. N-linked (GlcNAc...) asparagine glycosylation is found at Asn506, Asn556, Asn569, Asn622, Asn646, and Asn736. An interaction with TGEV spike glycoprotein region spans residues 717-813 (KYLRKQVEPL…DQWDFAWGQL (97 aa)). 2 cysteine pairs are disulfide-bonded: Cys758–Cys765 and Cys795–Cys831.

Belongs to the peptidase M1 family. In terms of assembly, homodimer. Interacts with SLC6A19. (Microbial infection) Interacts with TGEV and PRCoV spike glycoprotein. It depends on Zn(2+) as a cofactor. Post-translationally, sulfated. In terms of processing, N- and O-glycosylated. May undergo proteolysis and give rise to a soluble form.

The protein localises to the cell membrane. The catalysed reaction is Release of an N-terminal amino acid, Xaa-|-Yaa- from a peptide, amide or arylamide. Xaa is preferably Ala, but may be most amino acids including Pro (slow action). When a terminal hydrophobic residue is followed by a prolyl residue, the two may be released as an intact Xaa-Pro dipeptide.. Its function is as follows. Broad specificity aminopeptidase which plays a role in the final digestion of peptides generated from hydrolysis of proteins by gastric and pancreatic proteases. Also involved in the processing of various peptides including peptide hormones, such as angiotensin III and IV, neuropeptides, and chemokines. May also be involved the cleavage of peptides bound to major histocompatibility complex class II molecules of antigen presenting cells. May have a role in angiogenesis and promote cholesterol crystallization. It is able to degrade Leu-enkephalin and Met-enkephalin but not cholecystokinin CCK8, neuromedin C (GRP-10), somatostatin-14, substance P and vasoactive intestinal peptide. May have a role in amino acid transport by acting as binding partner of amino acid transporter SLC6A19 and regulating its activity. (Microbial infection) In case of porcine transmissible gastroenteritis coronavirus (TGEV) and porcine respiratory coronavirus (PRCoV) infections, serves as a receptor for TGEV and PRCoV spike glycoprotein in a species-specific manner. The chain is Aminopeptidase N (ANPEP) from Sus scrofa (Pig).